Reading from the N-terminus, the 269-residue chain is Small ribosomal subunit protein uS2 (269 aa).

The tract at residues alanine 224–glutamate 269 is disordered. Acidic residues predominate over residues aspartate 230–glutamate 269.

The protein belongs to the universal ribosomal protein uS2 family.

This Finegoldia magna (strain ATCC 29328 / DSM 20472 / WAL 2508) (Peptostreptococcus magnus) protein is Small ribosomal subunit protein uS2.